The following is a 104-amino-acid chain: UPF0213 protein VIBHAR_05350 (104 aa).

A GIY-YIG domain is found at 7-82; that stretch reads QRWSVYLIRN…KQLTKTKKEL (76 aa).

Belongs to the UPF0213 family.

This is UPF0213 protein VIBHAR_05350 from Vibrio campbellii (strain ATCC BAA-1116).